A 274-amino-acid polypeptide reads, in one-letter code: 2,3,4,5-tetrahydropyridine-2,6-dicarboxylate N-succinyltransferase (274 aa).

It belongs to the transferase hexapeptide repeat family.

The protein resides in the cytoplasm. It carries out the reaction (S)-2,3,4,5-tetrahydrodipicolinate + succinyl-CoA + H2O = (S)-2-succinylamino-6-oxoheptanedioate + CoA. It participates in amino-acid biosynthesis; L-lysine biosynthesis via DAP pathway; LL-2,6-diaminopimelate from (S)-tetrahydrodipicolinate (succinylase route): step 1/3. This is 2,3,4,5-tetrahydropyridine-2,6-dicarboxylate N-succinyltransferase from Salmonella agona (strain SL483).